Consider the following 111-residue polypeptide: Cytochrome c (111 aa).

Position 1 is an N-acetylalanine (Ala-1). Positions 22, 25, and 26 each coordinate heme c. An N6,N6,N6-trimethyllysine modification is found at Lys-80. Met-88 serves as a coordination point for heme c. Lys-94 carries the post-translational modification N6,N6,N6-trimethyllysine.

The protein belongs to the cytochrome c family. Post-translationally, binds 1 heme c group covalently per subunit.

The protein resides in the mitochondrion intermembrane space. In terms of biological role, electron carrier protein. The oxidized form of the cytochrome c heme group can accept an electron from the heme group of the cytochrome c1 subunit of cytochrome reductase. Cytochrome c then transfers this electron to the cytochrome oxidase complex, the final protein carrier in the mitochondrial electron-transport chain. The sequence is that of Cytochrome c from Cucurbita maxima (Pumpkin).